A 275-amino-acid chain; its full sequence is Ribosomal RNA small subunit methyltransferase A (275 aa).

6 residues coordinate S-adenosyl-L-methionine: asparagine 19, leucine 21, glycine 46, glutamate 71, aspartate 94, and asparagine 117.

Belongs to the class I-like SAM-binding methyltransferase superfamily. rRNA adenine N(6)-methyltransferase family. RsmA subfamily.

It localises to the cytoplasm. It catalyses the reaction adenosine(1518)/adenosine(1519) in 16S rRNA + 4 S-adenosyl-L-methionine = N(6)-dimethyladenosine(1518)/N(6)-dimethyladenosine(1519) in 16S rRNA + 4 S-adenosyl-L-homocysteine + 4 H(+). Specifically dimethylates two adjacent adenosines (A1518 and A1519) in the loop of a conserved hairpin near the 3'-end of 16S rRNA in the 30S particle. May play a critical role in biogenesis of 30S subunits. This chain is Ribosomal RNA small subunit methyltransferase A, found in Burkholderia multivorans (strain ATCC 17616 / 249).